A 133-amino-acid polypeptide reads, in one-letter code: Antifungal protein ginkbilobin-like protein 2 (133 aa).

The signal sequence occupies residues 1-24; sequence MSMGSFGFALAVMVLAVLVASAAG. A Gnk2-homologous domain is found at 28-133; it reads TNLVSSACNG…CFIRYEQYSI (106 aa). Alpha-D-mannopyranose is bound at residue Asn36. 2 disulfides stabilise this stretch: Cys87-Cys96 and Cys99-Cys124. 2 residues coordinate alpha-D-mannopyranose: Arg118 and Glu129.

Its function is as follows. Exerts antifungal activity through its carbohydrate-binding specificity. The sequence is that of Antifungal protein ginkbilobin-like protein 2 from Picea glauca (White spruce).